The chain runs to 374 residues: Chaperone protein DnaJ (374 aa).

In terms of domain architecture, J spans 4–68 (DYYDILGVSR…QMRGRYDQFG (65 aa)). The segment at 133 to 215 (GGEQQIRISH…CGGRGQNQVS (83 aa)) adopts a CR-type zinc-finger fold. Zn(2+) contacts are provided by Cys-146, Cys-149, Cys-163, Cys-166, Cys-189, Cys-192, Cys-203, and Cys-206. CXXCXGXG motif repeat units lie at residues 146–153 (CKTCEGTG), 163–170 (CSTCQGSG), 189–196 (CPTCNGQG), and 203–210 (CDSCGGRG).

This sequence belongs to the DnaJ family. As to quaternary structure, homodimer. Zn(2+) serves as cofactor.

It is found in the cytoplasm. In terms of biological role, participates actively in the response to hyperosmotic and heat shock by preventing the aggregation of stress-denatured proteins and by disaggregating proteins, also in an autonomous, DnaK-independent fashion. Unfolded proteins bind initially to DnaJ; upon interaction with the DnaJ-bound protein, DnaK hydrolyzes its bound ATP, resulting in the formation of a stable complex. GrpE releases ADP from DnaK; ATP binding to DnaK triggers the release of the substrate protein, thus completing the reaction cycle. Several rounds of ATP-dependent interactions between DnaJ, DnaK and GrpE are required for fully efficient folding. Also involved, together with DnaK and GrpE, in the DNA replication of plasmids through activation of initiation proteins. The chain is Chaperone protein DnaJ from Acaryochloris marina (strain MBIC 11017).